We begin with the raw amino-acid sequence, 224 residues long: uncharacterized protein (224 aa).

Residues H57, H59, D61, H62, H138, D162, and H203 each contribute to the Zn(2+) site.

The protein belongs to the metallo-beta-lactamase superfamily. Glyoxalase II family. Zn(2+) is required as a cofactor.

This is an uncharacterized protein from Mycobacterium tuberculosis (strain CDC 1551 / Oshkosh).